The primary structure comprises 155 residues: Small ribosomal subunit protein uS7cz/uS7cy (155 aa).

This sequence belongs to the universal ribosomal protein uS7 family. As to quaternary structure, part of the 30S ribosomal subunit.

It is found in the plastid. Its subcellular location is the chloroplast. Its function is as follows. One of the primary rRNA binding proteins, it binds directly to 16S rRNA where it nucleates assembly of the head domain of the 30S subunit. In Phalaenopsis aphrodite subsp. formosana (Moth orchid), this protein is Small ribosomal subunit protein uS7cz/uS7cy (rps7-A).